Consider the following 458-residue polypeptide: Transmembrane protein 135 (458 aa).

A run of 6 helical transmembrane segments spans residues 68–88, 96–116, 149–169, 298–318, 331–351, and 380–400; these read ILQSASFLTANGALFMAFFCI, FYLWSPGFGAALPASYVAILV, TLRNGEVLLFCITAAMYMFFF, FQLGAFLGSFVSIYKGTSCFL, IIAGFLAGVSMMFYKSTTISM, and IIYSISTAICFQAAVMEVQTL.

The protein belongs to the TMEM135 family.

It is found in the mitochondrion membrane. Its subcellular location is the peroxisome membrane. Functionally, involved in mitochondrial metabolism by regulating the balance between mitochondrial fusion and fission. May act as a regulator of mitochondrial fission that promotes DNM1L-dependent fission through activation of DNM1L. May be involved in peroxisome organization. In Bos taurus (Bovine), this protein is Transmembrane protein 135.